Here is a 206-residue protein sequence, read N- to C-terminus: 3-isopropylmalate dehydratase small subunit (206 aa).

Belongs to the LeuD family. LeuD type 1 subfamily. As to quaternary structure, heterodimer of LeuC and LeuD.

The enzyme catalyses (2R,3S)-3-isopropylmalate = (2S)-2-isopropylmalate. It participates in amino-acid biosynthesis; L-leucine biosynthesis; L-leucine from 3-methyl-2-oxobutanoate: step 2/4. Catalyzes the isomerization between 2-isopropylmalate and 3-isopropylmalate, via the formation of 2-isopropylmaleate. The chain is 3-isopropylmalate dehydratase small subunit from Acidobacterium capsulatum (strain ATCC 51196 / DSM 11244 / BCRC 80197 / JCM 7670 / NBRC 15755 / NCIMB 13165 / 161).